A 248-amino-acid polypeptide reads, in one-letter code: UPF0736 protein BcerKBAB4_1085 (248 aa).

Belongs to the UPF0736 family.

The chain is UPF0736 protein BcerKBAB4_1085 from Bacillus mycoides (strain KBAB4) (Bacillus weihenstephanensis).